The primary structure comprises 181 residues: Large ribosomal subunit protein uL10 (181 aa).

This sequence belongs to the universal ribosomal protein uL10 family. As to quaternary structure, part of the ribosomal stalk of the 50S ribosomal subunit. The N-terminus interacts with L11 and the large rRNA to form the base of the stalk. The C-terminus forms an elongated spine to which L12 dimers bind in a sequential fashion forming a multimeric L10(L12)X complex.

Forms part of the ribosomal stalk, playing a central role in the interaction of the ribosome with GTP-bound translation factors. This is Large ribosomal subunit protein uL10 from Acidobacterium capsulatum (strain ATCC 51196 / DSM 11244 / BCRC 80197 / JCM 7670 / NBRC 15755 / NCIMB 13165 / 161).